The following is a 536-amino-acid chain: Probable E3 ubiquitin-protein ligase ARI13 (536 aa).

The tract at residues 83-328 (KISSCGICFK…GFYKFCNVSM (246 aa)) is TRIAD supradomain. 24 residues coordinate Zn(2+): cysteine 87, cysteine 90, cysteine 106, histidine 108, cysteine 111, cysteine 114, cysteine 135, cysteine 140, cysteine 180, cysteine 185, cysteine 210, cysteine 212, cysteine 217, cysteine 220, histidine 225, cysteine 230, cysteine 277, cysteine 280, cysteine 297, cysteine 299, cysteine 304, cysteine 307, histidine 314, and cysteine 324. The RING-type 1 zinc finger occupies 87–140 (CGICFKTCDDGDYLISTPFCSHMFCKSCWRKYLEKNFYLVEKTQTRISCPHGAC). An IBR-type zinc finger spans residues 158 to 230 (EMYVEYILRS…MLESHKPVTC (73 aa)). Residues 277–307 (CPHCLRPADLGTKQYLRFLTCACNGRFCWKC) form an RING-type 2; atypical zinc finger. A RanBP2-type zinc finger spans residues 495-526 (DYGGLFWLCDRCTYGNTWFHKECLMCSDDIAA).

This sequence belongs to the RBR family. Ariadne subfamily. The cofactor is Zn(2+).

The enzyme catalyses [E2 ubiquitin-conjugating enzyme]-S-ubiquitinyl-L-cysteine + [acceptor protein]-L-lysine = [E2 ubiquitin-conjugating enzyme]-L-cysteine + [acceptor protein]-N(6)-ubiquitinyl-L-lysine.. It participates in protein modification; protein ubiquitination. Might act as an E3 ubiquitin-protein ligase, or as part of E3 complex, which accepts ubiquitin from specific E2 ubiquitin-conjugating enzymes and then transfers it to substrates. In Arabidopsis thaliana (Mouse-ear cress), this protein is Probable E3 ubiquitin-protein ligase ARI13 (ARI13).